The sequence spans 284 residues: Signal peptidase I (284 aa).

A helical transmembrane segment spans residues 4–22 (NFPLLLVIAVAVCGLLALL). Over 23 to 58 (DLVFFAPRRRSAIASYQGSVSQPDAVVIEKLNKEPL) the chain is Cytoplasmic. The helical transmembrane segment at 59 to 77 (LVEYGKSFFPVLFIVLVLR) threads the bilayer. Residues 78–284 (SFLVEPFQIP…PNFSRVGLIK (207 aa)) lie on the Periplasmic side of the membrane. Residues S90 and K145 contribute to the active site.

It belongs to the peptidase S26 family.

It localises to the cell inner membrane. It catalyses the reaction Cleavage of hydrophobic, N-terminal signal or leader sequences from secreted and periplasmic proteins.. In Pseudomonas fluorescens, this protein is Signal peptidase I (lepB).